The following is a 535-amino-acid chain: Importin subunit alpha-2 (535 aa).

An IBB domain is found at 1–58; it reads MSLRPNAKTEVRRNRYKVAVDAEEGRRRREDNMVEIRKSKREESLQKKRREGLQANQL. Basic and acidic residues predominate over residues 20 to 46; the sequence is VDAEEGRRRREDNMVEIRKSKREESLQ. The segment at 20–67 is disordered; the sequence is VDAEEGRRRREDNMVEIRKSKREESLQKKRREGLQANQLPQFAPSPVP. ARM repeat units follow at residues 67 to 106, 110 to 150, 153 to 192, 195 to 235, 237 to 276, 279 to 318, 321 to 361, 364 to 403, 407 to 446, and 461 to 500; these read PASS…KLLS, SPPI…NIAS, SENT…NVAG, PRCR…NFCR, KPQP…YLSD, NDKI…NIVT, DLQT…NITA, RDQI…NATS, PDQI…NILK, and NFYA…TYWL.

Belongs to the importin alpha family. As to quaternary structure, forms a complex with the importin subunit beta-1 KPNB1. Interacts with A.tumefaciens VirD2 and VirE2. Binds to SWO1.

Its subcellular location is the nucleus envelope. Functionally, binds to conventional NLS motifs and mediates nuclear protein import across the nuclear envelope. Involved in the maintenance of cell wall integrity under salt stress via interaction with SWO1. Acts as a cellular receptor for the nuclear import of the virD2 protein of Agrobacterium, but is not essential for Agrobacterium-mediated root transformation. The polypeptide is Importin subunit alpha-2 (Arabidopsis thaliana (Mouse-ear cress)).